The sequence spans 581 residues: Aspartate--tRNA ligase (581 aa).

Glutamate 170 serves as a coordination point for L-aspartate. Residues 194-197 (QLFK) are aspartate. Residue arginine 216 coordinates L-aspartate. ATP-binding positions include 216 to 218 (RDE) and glutamine 225. An L-aspartate-binding site is contributed by histidine 439. Glutamate 468 is an ATP binding site. An L-aspartate-binding site is contributed by arginine 475. 520–523 (GFDR) contacts ATP.

It belongs to the class-II aminoacyl-tRNA synthetase family. Type 1 subfamily. As to quaternary structure, homodimer.

It is found in the cytoplasm. The catalysed reaction is tRNA(Asp) + L-aspartate + ATP = L-aspartyl-tRNA(Asp) + AMP + diphosphate. Functionally, catalyzes the attachment of L-aspartate to tRNA(Asp) in a two-step reaction: L-aspartate is first activated by ATP to form Asp-AMP and then transferred to the acceptor end of tRNA(Asp). This chain is Aspartate--tRNA ligase, found in Thermosipho melanesiensis (strain DSM 12029 / CIP 104789 / BI429).